The following is a 293-amino-acid chain: Protease HtpX homolog (293 aa).

The next 2 helical transmembrane spans lie at 6–26 (VAVMLAAMTGLFLAVGYLIGG) and 28–48 (SGMVIAFLVAGGMNLFAYWNS). Position 130 (His130) interacts with Zn(2+). The active site involves Glu131. Residue His134 coordinates Zn(2+). Transmembrane regions (helical) follow at residues 145–165 (LTATLAGAISMLANFAFFFGG) and 172–192 (PLGAVGMIVMMILAPLAAMMV). Position 201 (Glu201) interacts with Zn(2+).

It belongs to the peptidase M48B family. Zn(2+) is required as a cofactor.

It localises to the cell inner membrane. The chain is Protease HtpX homolog from Rhodospirillum rubrum (strain ATCC 11170 / ATH 1.1.1 / DSM 467 / LMG 4362 / NCIMB 8255 / S1).